Here is a 114-residue protein sequence, read N- to C-terminus: uncharacterized protein (114 aa).

The segment at 1 to 24 (MFGACYKQPLKPSGSEPPAEECRM) is disordered.

In terms of tissue distribution, expressed in kidney and liver.

This is an uncharacterized protein from Homo sapiens (Human).